A 173-amino-acid polypeptide reads, in one-letter code: Translationally-controlled tumor protein homolog (173 aa).

Residues 1–173 (MIIFKDMITG…FKHGLEEEKV (173 aa)) form the TCTP domain.

The protein belongs to the TCTP family. As to expression, expressed by the venom gland.

The protein resides in the secreted. Functionally, venom protein that causes edema, enhances vascular permeability and is likely related to the inflammatory activity of the venom. The sequence is that of Translationally-controlled tumor protein homolog from Grammostola rosea (Chilean rose tarantula).